Reading from the N-terminus, the 387-residue chain is O-methyltransferase lepI (387 aa).

135–148 (FENLWPVLMALPDF) contributes to the substrate binding site. The segment at 175 to 195 (CFHWLATQPTRIANFKVLLTD) is substrate binding. S-adenosyl-L-methionine is bound by residues 227–228 (GG), Asp252, 275–276 (NF), and Arg291.

The protein belongs to the class I-like SAM-binding methyltransferase superfamily. Cation-independent O-methyltransferase family.

O-methyltransferase; part of the gene cluster 23 that mediates the biosynthesis of a family of 2-pyridones known as leporins. The hybrid PKS-NRPS synthetase lepA and the enoyl reductase lepG are responsible for fusion of phenylalanine with a hexaketide and subsequent release of the stable tetramic acid precursor, pre-leporin C. Because lepA lacks a designated enoylreductase (ER) domain, the required activity is provided the enoyl reductase lepG. It is possible that the dehydrogenase lepF also participates in production of pre-leporin C. Cytochrome P450 monooxygenase lepH is then required for the ring expansion step to yield leporin C. Leporin C is then presumably further oxidized by the N-hydroxylase lepD to form leporin B. LepI may possess a function in biosynthesis upstream of lepA. Leporin B is further oxidized in the presence of ferric ion to give the leporin B trimer-iron chelate, but whether or not this reaction is catalyzed by an enzyme in the pathway or by ferric ion is not determined yet. The protein is O-methyltransferase lepI of Aspergillus flavus (strain ATCC 200026 / FGSC A1120 / IAM 13836 / NRRL 3357 / JCM 12722 / SRRC 167).